Consider the following 626-residue polypeptide: (+)-3-carene synthase 1, chloroplastic (626 aa).

A chloroplast-targeting transit peptide spans 1 to 45 (MSLISAVPLASSCVSKSLISSVREHTALRRAIATLQMSRRGKSVA). Mg(2+) is bound by residues aspartate 377, aspartate 381, and aspartate 529. The short motif at 377-381 (DDMYD) is the DDXXD motif element.

It belongs to the terpene synthase family. Tpsd subfamily. Mg(2+) serves as cofactor. The cofactor is Mn(2+).

Its subcellular location is the plastid. It is found in the chloroplast. The catalysed reaction is (2E)-geranyl diphosphate = (+)-car-3-ene + diphosphate. It carries out the reaction (2E)-geranyl diphosphate = terpinolene + diphosphate. It functions in the pathway terpene metabolism; oleoresin biosynthesis. Its pathway is secondary metabolite biosynthesis; terpenoid biosynthesis. In terms of biological role, monoterpene synthase (TPS) involved in the biosynthesis of monoterpene natural products included in conifer oleoresin secretions and volatile emissions; these compounds contribute to biotic and abiotic stress defense against herbivores and pathogens. Catalyzes the conversion of (2E)-geranyl diphosphate (GPP) to (+)-car-3-ene and, to a lower extent, to terpinolene. This chain is (+)-3-carene synthase 1, chloroplastic, found in Pinus contorta (Shore pine).